The chain runs to 1107 residues: MRLIITFLMAWCLSWGAYAATAPDSKQITQELEQAKAAKPAQPEVVEALQSALNALEERKGSLERIKQYQQVIDNYPKLSATLRAQLNNMRDEPRSVSPGMSTDALNQEILQVSSQLLDKSRQAQQEQERAREIADSLNQLPQQQTDARRQLNEIERRLGTLTGNTPLNQAQNFALQSDSARLKALVDELELAQLSANNRQELARLRSELAEKESQQLDAYLQALRNQLNSQRQLEAERALESTELLAENSADLPKDIVAQFKINRELSAALNQQAQRMDLVASQQRQAASQTLQVRQALNTLREQSQWLGSSNLLGEALRAQVARLPEMPKPQQLDTEMAQLRVQRLRYEDLLNKQPLLRQIHQADGQPLTAEQNRILEAQLRTQRELLNSLLQGGDTLLLELTKLKVSNGQLEDALKEVNEATHRYLFWTSDVRPMTIAWPLEIAQDLRRLISLDTFSQLGKASVMMLTSKETILPLFGALILVGCSIYSRRYFTRFLERSAAKVGKVTQDHFWLTLRTLFWSILVASPLPVLWMTLGYGLREAWPYPLAVAIGDGVTATVPLLWVVMICATFARPNGLFIAHFGWPRERVSRGMRYYLMSIGLIVPLIMALMMFDNLDDREFSGSLGRLCFILICGALAVVTLSLKKAGIPLYLNKEGSGDNITNHMLWNMMIGAPLVAILASAVGYLATAQALLARLETSVAIWFLLLVVYHVIRRWMLIQRRRLAFDRAKHRRAEMLAQRARGEEEAHHHSSPEGAIEVDESEVDLDAISAQSLRLVRSILMLIALLSVIVLWSEIHSAFGFLENISLWDVTSTVQGVESLEPITLGAVLIAILVFIITTQLVRNLPALLELAILQHLDLTPGTGYAITTITKYLLMLIGGLVGFSMIGIEWSKLQWLVAALGVGLGFGLQEIFANFISGLIILFEKPIRIGDTVTIRDLTGSVTKINTRATTISDWDRKEIIVPNKAFITEQFINWSLSDSVTRVVLTIPAPADANSEEVTEILLTAARRCSLVIDNPAPEVFLVDLQQGIQIFELRIYAAEMGHRMPLRHEIHQLILAGFHAHGIDMPFPPFQMRLESLNGKQTGRTLTSAGKGRQAGSL.

An N-terminal signal peptide occupies residues M1 to A19. A run of 11 helical transmembrane segments spans residues V467 to G487, L522 to G542, L551 to I571, Y600 to L620, S628 to L648, M674 to A694, L698 to I718, I785 to F805, P828 to V848, T875 to I895, and G910 to F930.

It belongs to the MscS (TC 1.A.23) family. Homoheptamer.

It is found in the cell inner membrane. Mechanosensitive channel that protects cells against hypoosmotic stress when highly overexpressed. Gates spontaneously in response to increased membrane tension. The sequence is that of Miniconductance mechanosensitive channel MscM (mscM) from Escherichia coli (strain K12).